A 58-amino-acid polypeptide reads, in one-letter code: Bestoxin (58 aa).

Positions 3–58 (VPGNYPLDKDGNTYTCLELGENKDCQKVCKLHGVQYGYCYAFSCWCKEYLDDKDSV) constitute an LCN-type CS-alpha/beta domain. Intrachain disulfides connect Cys18–Cys41, Cys27–Cys46, and Cys31–Cys48.

In terms of tissue distribution, expressed by the venom gland.

It is found in the secreted. In terms of biological role, beta toxins bind voltage-independently at site-4 of sodium channels (Nav) and shift the voltage of activation toward more negative potentials thereby affecting sodium channel activation and promoting spontaneous and repetitive firing. In mice, causes intense writhing. This Parabuthus transvaalicus (Transvaal thick-tailed scorpion) protein is Bestoxin.